A 446-amino-acid chain; its full sequence is Palmitoyltransferase PFA4 (446 aa).

Residues 1–8 (MAVQLKWP) lie on the Cytoplasmic side of the membrane. A helical transmembrane segment spans residues 9-29 (ILGVIIPCIIIFSLSYGSHYF). The Lumenal segment spans residues 30–40 (ILRHHLTMKQQ). Residues 41–61 (LIYEFYVTMIWISYLLAIYTN) traverse the membrane as a helical segment. Over 62 to 161 (PGRVPKNYKP…GNNNLPHFMR (100 aa)) the chain is Cytoplasmic. A DHHC domain is found at 114–164 (RYCKKCNNYKPPRSHHCKICQQCVLQMDHHCPWTLNCVGNNNLPHFMRFLG). The S-palmitoyl cysteine intermediate role is filled by C144. Residues 162–182 (FLGWIIWGTGYLMIQLIKLII) form a helical membrane-spanning segment. Topologically, residues 183-201 (NYYENSNMPHYLFNKTELV) are lumenal. Residues 202–222 (AIIAITPLNFFVFASILVLFI) traverse the membrane as a helical segment. The Cytoplasmic segment spans residues 223-446 (RCLINICKGM…TDFGVDEDSD (224 aa)).

This sequence belongs to the DHHC palmitoyltransferase family. PFA4 subfamily.

Its subcellular location is the endoplasmic reticulum membrane. The catalysed reaction is L-cysteinyl-[protein] + hexadecanoyl-CoA = S-hexadecanoyl-L-cysteinyl-[protein] + CoA. Functionally, mediates the reversible addition of palmitate to target proteins, thereby regulating their membrane association and biological function. The polypeptide is Palmitoyltransferase PFA4 (Candida albicans (strain SC5314 / ATCC MYA-2876) (Yeast)).